Consider the following 491-residue polypeptide: Cobyric acid synthase (491 aa).

The GATase cobBQ-type domain maps to Ala253–Leu429. The Nucleophile role is filled by Cys334. The active site involves His421.

It belongs to the CobB/CobQ family. CobQ subfamily.

Its pathway is cofactor biosynthesis; adenosylcobalamin biosynthesis. Functionally, catalyzes amidations at positions B, D, E, and G on adenosylcobyrinic A,C-diamide. NH(2) groups are provided by glutamine, and one molecule of ATP is hydrogenolyzed for each amidation. The protein is Cobyric acid synthase of Mycobacterium marinum (strain ATCC BAA-535 / M).